Reading from the N-terminus, the 380-residue chain is Chorismate synthase (380 aa).

NADP(+) is bound at residue Arg49. FMN-binding positions include Gly288, 303-307 (KPPSS), and Arg330.

Belongs to the chorismate synthase family. FMNH2 serves as cofactor.

It catalyses the reaction 5-O-(1-carboxyvinyl)-3-phosphoshikimate = chorismate + phosphate. It participates in metabolic intermediate biosynthesis; chorismate biosynthesis; chorismate from D-erythrose 4-phosphate and phosphoenolpyruvate: step 7/7. Catalyzes the anti-1,4-elimination of the C-3 phosphate and the C-6 proR hydrogen from 5-enolpyruvylshikimate-3-phosphate (EPSP) to yield chorismate, which is the branch point compound that serves as the starting substrate for the three terminal pathways of aromatic amino acid biosynthesis. This reaction introduces a second double bond into the aromatic ring system. This is Chorismate synthase from Aeropyrum pernix (strain ATCC 700893 / DSM 11879 / JCM 9820 / NBRC 100138 / K1).